A 69-amino-acid chain; its full sequence is NAD(P)H-quinone oxidoreductase subunit L (69 aa).

2 helical membrane passes run 5–25 and 40–60; these read LILL…ITYF and GFMY…SPFL.

It belongs to the complex I NdhL subunit family. As to quaternary structure, NDH-1 can be composed of about 15 different subunits; different subcomplexes with different compositions have been identified which probably have different functions.

It is found in the cellular thylakoid membrane. It carries out the reaction a plastoquinone + NADH + (n+1) H(+)(in) = a plastoquinol + NAD(+) + n H(+)(out). The enzyme catalyses a plastoquinone + NADPH + (n+1) H(+)(in) = a plastoquinol + NADP(+) + n H(+)(out). NDH-1 shuttles electrons from an unknown electron donor, via FMN and iron-sulfur (Fe-S) centers, to quinones in the respiratory and/or the photosynthetic chain. The immediate electron acceptor for the enzyme in this species is believed to be plastoquinone. Couples the redox reaction to proton translocation, and thus conserves the redox energy in a proton gradient. Cyanobacterial NDH-1 also plays a role in inorganic carbon-concentration. This Acaryochloris marina (strain MBIC 11017) protein is NAD(P)H-quinone oxidoreductase subunit L.